Consider the following 346-residue polypeptide: Archaeosine synthase subunit beta (346 aa).

Residues 36-276 form the Radical SAM core domain; it reads GVQTKTLTVI…LRQAKAAHPE (241 aa). 3 residues coordinate [4Fe-4S] cluster: cysteine 51, cysteine 59, and cysteine 62.

Belongs to the radical SAM superfamily. RaSEA family. In terms of assembly, forms a robust complex with the archaeosine synthase alpha subunit ArcS. This complex likely consists of an alpha(2)beta(2) heterotetrameric structure. Requires [4Fe-4S] cluster as cofactor.

The enzyme catalyses 7-N-[(5S)-5-amino-5-carboxypentyl]formamidino-7-deazaguanosine(15) in tRNA + S-adenosyl-L-methionine = archaeosine(15) in tRNA + L-1-piperideine-6-carboxylate + 5'-deoxyadenosine + L-methionine + 2 H(+). Its pathway is tRNA modification; archaeosine-tRNA biosynthesis. Radical SAM enzyme involved in the synthesis of archaeosine, a modified nucleoside present in the dihydrouridine loop (D-loop) of archaeal tRNAs. Catalyzes the cleavage of the C(epsilon)-N bond of the lysine moiety of q0kN15-tRNA, leading to the formation of archaeosine at position 15 in tRNAs. The sequence is that of Archaeosine synthase subunit beta from Methanosarcina acetivorans (strain ATCC 35395 / DSM 2834 / JCM 12185 / C2A).